Here is a 156-residue protein sequence, read N- to C-terminus: ATP synthase subunit b (156 aa).

The chain crosses the membrane as a helical span at residues 3-23 (ITLTIFAQALAFAGLIWIVAT).

The protein belongs to the ATPase B chain family. F-type ATPases have 2 components, F(1) - the catalytic core - and F(0) - the membrane proton channel. F(1) has five subunits: alpha(3), beta(3), gamma(1), delta(1), epsilon(1). F(0) has three main subunits: a(1), b(2) and c(10-14). The alpha and beta chains form an alternating ring which encloses part of the gamma chain. F(1) is attached to F(0) by a central stalk formed by the gamma and epsilon chains, while a peripheral stalk is formed by the delta and b chains.

It is found in the cell inner membrane. Its function is as follows. F(1)F(0) ATP synthase produces ATP from ADP in the presence of a proton or sodium gradient. F-type ATPases consist of two structural domains, F(1) containing the extramembraneous catalytic core and F(0) containing the membrane proton channel, linked together by a central stalk and a peripheral stalk. During catalysis, ATP synthesis in the catalytic domain of F(1) is coupled via a rotary mechanism of the central stalk subunits to proton translocation. In terms of biological role, component of the F(0) channel, it forms part of the peripheral stalk, linking F(1) to F(0). The protein is ATP synthase subunit b of Xanthomonas oryzae pv. oryzae (strain MAFF 311018).